We begin with the raw amino-acid sequence, 88 residues long: Phosphoribosyl-ATP pyrophosphatase (88 aa).

Belongs to the PRA-PH family.

The protein resides in the cytoplasm. It carries out the reaction 1-(5-phospho-beta-D-ribosyl)-ATP + H2O = 1-(5-phospho-beta-D-ribosyl)-5'-AMP + diphosphate + H(+). Its pathway is amino-acid biosynthesis; L-histidine biosynthesis; L-histidine from 5-phospho-alpha-D-ribose 1-diphosphate: step 2/9. This Cutibacterium acnes (strain DSM 16379 / KPA171202) (Propionibacterium acnes) protein is Phosphoribosyl-ATP pyrophosphatase.